A 1241-amino-acid polypeptide reads, in one-letter code: MALGTTLRASLLLLGLLTEGLAQLAIPASVPRGFWALPENLTVVEGASVELRCGVSTPGSAVQWAKDGLLLGPDPRIPGFPRYRLEGDPARGEFHLHIEACDLSDDAEYECQVGRSEMGPELVSPRVILSILVPPKLLLLTPEAGTMVTWVAGQEYVVNCVSGDAKPAPDITILLSGQTISDISANVNEGSQQKLFTVEATARVTPRSSDNRQLLVCEASSPALEAPIKASFTVNVLFPPGPPVIEWPGLDEGHVRAGQSLELPCVARGGNPLATLQWLKNGQPVSTAWGTEHTQAVARSVLVMTVRPEDHGAQLSCEAHNSVSAGTQEHGITLQVTFPPSAIIILGSASQTENKNVTLSCVSKSSRPRVLLRWWLGWRQLLPMEETVMDGLHGGHISMSNLTFLARREDNGLTLTCEAFSEAFTKETFKKSLILNVKYPAQKLWIEGPPEGQKLRAGTRVRLVCLAIGGNPEPSLMWYKDSRTVTESRLPQESRRVHLGSVEKSGSTFSRELVLVTGPSDNQAKFTCKAGQLSASTQLAVQFPPTNVTILANASALRPGDALNLTCVSVSSNPPVNLSWDKEGERLEGVAAPPRRAPFKGSAAARSVLLQVSSRDHGQRVTCRAHSAELRETVSSFYRLNVLYRPEFLGEQVLVVTAVEQGEALLPVSVSANPAPEAFNWTFRGYRLSPAGGPRHRILSSGALHLWNVTRADDGLYQLHCQNSEGTAEARLRLDVHYAPTIRALQDPTEVNVGGSVDIVCTVDANPILPGMFNWERLGEDEEDQSLDDMEKISRGPTGRLRIHHAKLAQAGAYQCIVDNGVAPPARRLLRLVVRFAPQVEHPTPLTKVAAAGDSTSSATLHCRARGVPNIVFTWTKNGVPLDLQDPRYTEHTYHQGGVHSSLLTIANVSAAQDYALFTCTATNALGSDQTNIQLVSISRPDPPSGLKVVSLTPHSVGLEWKPGFDGGLPQRFCIRYEALGTPGFHYVDVVPPQATTFTLTGLQPSTRYRVWLLASNALGDSGLADKGTQLPITTPGLHQPSGEPEDQLPTEPPSGPSGLPLLPVLFALGGLLLLSNASCVGGVLWQRRLRRLAEGISEKTEAGSEEDRVRNEYEESQWTGERDTQSSTVSTTEAEPYYRSLRDFSPQLPPTQEEVSYSRGFTGEDEDMAFPGHLYDEVERTYPPSGAWGPLYDEVQMGPWDLHWPEDTYQDPRGIYDQVAGDLDTLEPDSLPFELRGHLV.

Residues 1 to 22 form the signal peptide; it reads MALGTTLRASLLLLGLLTEGLA. Over 23 to 1055 the chain is Extracellular; the sequence is QLAIPASVPR…EDQLPTEPPS (1033 aa). Ig-like C2-type domains follow at residues 27-130, 143-234, 242-333, 340-434, 440-540, and 544-635; these read PASV…VILS, EAGT…SFTV, PPVI…HGIT, PSAI…KSLI, PAQK…TQLA, and PPTN…ETVS. An N-linked (GlcNAc...) asparagine glycan is attached at Asn40. Cystine bridges form between Cys53–Cys111, Cys160–Cys217, and Cys265–Cys317. N-linked (GlcNAc...) asparagine glycans are attached at residues Asn356 and Asn401. Cys361 and Cys417 form a disulfide bridge. Ser432 is subject to Phosphoserine. Cysteines 465 and 528 form a disulfide. N-linked (GlcNAc...) asparagine glycans are attached at residues Asn547, Asn553, Asn564, Asn577, Asn680, and Asn708. Cys567 and Cys623 are joined by a disulfide. 2 Ig-like C2-type domains span residues 740-832 and 838-939; these read PTIR…LLRL and PQVE…VSIS. Intrachain disulfides connect Cys761-Cys816 and Cys863-Cys920. A glycan (N-linked (GlcNAc...) asparagine) is linked at Asn908. Positions 943–1038 constitute a Fibronectin type-III domain; the sequence is PPSGLKVVSL…TQLPITTPGL (96 aa). Positions 1025 to 1057 are disordered; that stretch reads ADKGTQLPITTPGLHQPSGEPEDQLPTEPPSGP. A helical membrane pass occupies residues 1056–1076; the sequence is GPSGLPLLPVLFALGGLLLLS. Residues 1077–1241 lie on the Cytoplasmic side of the membrane; that stretch reads NASCVGGVLW…LPFELRGHLV (165 aa). Ser1098 is subject to Phosphoserine. Residues 1099-1114 show a composition bias toward basic and acidic residues; sequence EKTEAGSEEDRVRNEY. The interval 1099–1137 is disordered; the sequence is EKTEAGSEEDRVRNEYEESQWTGERDTQSSTVSTTEAEP. Residue Thr1101 is modified to Phosphothreonine. Ser1105 bears the Phosphoserine mark. The segment at 1160 to 1241 is binds to NPHS2; the sequence is RGFTGEDEDM…LPFELRGHLV (82 aa). Tyr1193 bears the Phosphotyrosine; by FYN mark.

It belongs to the immunoglobulin superfamily. As to quaternary structure, interacts with CD2AP (via C-terminal domain). Interacts with MAGI1 (via PDZ 2 and 3 domains) forming a tripartite complex with IGSF5/JAM4. Interacts with DDN; the interaction is direct. Self-associates (via the Ig-like domains). Also interacts (via the Ig-like domains) with KIRREL1/NEPH1 and KIRREL2; the interaction with KIRREL1 is dependent on KIRREL1 glycosylation. Interacts with KIRREL3. Forms a complex with ACTN4, CASK, IQGAP1, MAGI2, SPTAN1 and SPTBN1. Interacts with NPHS2. Interacts with phosphatidylinositol 3-kinase regulatory subunit PIK3R1; the interaction is reduced by high glucose levels. Post-translationally, phosphorylated at Tyr-1193 by FYN, leading to the recruitment and activation of phospholipase C-gamma-1/PLCG1. Tyrosine phosphorylation is reduced by high glucose levels. Dephosphorylated by tensin TNS2 which leads to reduced binding of NPHN1 to PIK3R1. In terms of tissue distribution, specifically expressed in podocytes of kidney glomeruli.

The protein resides in the cell membrane. Seems to play a role in the development or function of the kidney glomerular filtration barrier. Regulates glomerular vascular permeability. May anchor the podocyte slit diaphragm to the actin cytoskeleton. Plays a role in skeletal muscle formation through regulation of myoblast fusion. The chain is Nephrin (NPHS1) from Homo sapiens (Human).